A 237-amino-acid chain; its full sequence is MIIYPAIDIQGGQCVRLTQGKKEERKMYFDSPQAVAQRWQAEGAEFIHVVDLDGAFGKGEENMEAIEAIVKAVEIPIQVGGGIRSIEKIQQLLDLGVTRVILGTKALTDEAFLREAIEKYGDRIIVSIDAKEGYVATEGWVKTSSRRALDFAKSIEEIGVKRIVYTDIAKDGMLQGPNFDEIQRMKDSVGMEVIASGGISCETDLQGLKEMDVKGVIVGKALYEGKVQLGKLRGMDI.

The active-site Proton acceptor is the Asp8. The Proton donor role is filled by Asp129.

It belongs to the HisA/HisF family.

The protein resides in the cytoplasm. The enzyme catalyses 1-(5-phospho-beta-D-ribosyl)-5-[(5-phospho-beta-D-ribosylamino)methylideneamino]imidazole-4-carboxamide = 5-[(5-phospho-1-deoxy-D-ribulos-1-ylimino)methylamino]-1-(5-phospho-beta-D-ribosyl)imidazole-4-carboxamide. Its pathway is amino-acid biosynthesis; L-histidine biosynthesis; L-histidine from 5-phospho-alpha-D-ribose 1-diphosphate: step 4/9. The polypeptide is 1-(5-phosphoribosyl)-5-[(5-phosphoribosylamino)methylideneamino] imidazole-4-carboxamide isomerase (Alkaliphilus metalliredigens (strain QYMF)).